Here is a 361-residue protein sequence, read N- to C-terminus: Peptide chain release factor 1 (361 aa).

Residue Q235 is modified to N5-methylglutamine. A disordered region spans residues 288–307; that stretch reads AAEAQTRKLQVGSGDRSQRI.

The protein belongs to the prokaryotic/mitochondrial release factor family. Post-translationally, methylated by PrmC. Methylation increases the termination efficiency of RF1.

The protein resides in the cytoplasm. Functionally, peptide chain release factor 1 directs the termination of translation in response to the peptide chain termination codons UAG and UAA. The polypeptide is Peptide chain release factor 1 (Xanthomonas axonopodis pv. citri (strain 306)).